Here is a 718-residue protein sequence, read N- to C-terminus: Catalase-peroxidase (718 aa).

The segment at residues 98–219 (WHAAGTYRMG…LAATEMGLIY (122 aa)) is a cross-link (tryptophyl-tyrosyl-methioninium (Trp-Tyr) (with M-245)). Histidine 99 acts as the Proton acceptor in catalysis. The segment at residues 219–245 (YVNPEGPQASGDPRSAAPFIRATFGNM) is a cross-link (tryptophyl-tyrosyl-methioninium (Tyr-Met) (with W-98)). Heme b is bound at residue histidine 260.

Belongs to the peroxidase family. Peroxidase/catalase subfamily. As to quaternary structure, homodimer or homotetramer. It depends on heme b as a cofactor. In terms of processing, formation of the three residue Trp-Tyr-Met cross-link is important for the catalase, but not the peroxidase activity of the enzyme.

It catalyses the reaction H2O2 + AH2 = A + 2 H2O. The catalysed reaction is 2 H2O2 = O2 + 2 H2O. In terms of biological role, bifunctional enzyme with both catalase and broad-spectrum peroxidase activity. This is Catalase-peroxidase from Acinetobacter baumannii (strain ATCC 17978 / DSM 105126 / CIP 53.77 / LMG 1025 / NCDC KC755 / 5377).